The following is a 284-amino-acid chain: Tropomyosin beta chain (284 aa).

Methionine 1 is subject to N-acetylmethionine. The segment at 1–78 (MDAIKKKMQM…EKLEQAEKKA (78 aa)) is disordered. Positions 1-284 (MDAIKKKMQM…DNALNDITSL (284 aa)) form a coiled coil. Basic and acidic residues-rich tracts occupy residues 12–40 (KLDK…KQLE) and 51–78 (KGTE…EKKA). Threonine 53 carries the phosphothreonine modification. Serine 61 is modified (phosphoserine; by PIK3CG). Threonine 79 bears the Phosphothreonine mark. Serine 87 bears the Phosphoserine mark. Threonine 108 is modified (phosphothreonine). Residues 117–136 (EKAADESERGMKVIENRAMK) are disordered. 3 positions are modified to phosphoserine: serine 158, serine 206, and serine 215. A Phosphothreonine modification is found at threonine 252. At tyrosine 261 the chain carries Phosphotyrosine. A Phosphoserine modification is found at serine 271. Threonine 282 bears the Phosphothreonine mark. Serine 283 is modified (phosphoserine).

This sequence belongs to the tropomyosin family. Homodimer. Heterodimer of an alpha (TPM1, TPM3 or TPM4) and a beta (TPM2) chain. Post-translationally, phosphorylated on Ser-61 by PIK3CG. Phosphorylation on Ser-61 is required for ADRB2 internalization.

It is found in the cytoplasm. The protein resides in the cytoskeleton. Its function is as follows. Binds to actin filaments in muscle and non-muscle cells. Plays a central role, in association with the troponin complex, in the calcium dependent regulation of vertebrate striated muscle contraction. Smooth muscle contraction is regulated by interaction with caldesmon. In non-muscle cells is implicated in stabilizing cytoskeleton actin filaments. The non-muscle isoform may have a role in agonist-mediated receptor internalization. The polypeptide is Tropomyosin beta chain (Tpm2) (Mus musculus (Mouse)).